Here is a 101-residue protein sequence, read N- to C-terminus: UPF0473 protein MGAS10750_Spy1887 (101 aa).

It belongs to the UPF0473 family.

This Streptococcus pyogenes serotype M4 (strain MGAS10750) protein is UPF0473 protein MGAS10750_Spy1887.